A 265-amino-acid chain; its full sequence is Thiazole synthase (265 aa).

K103 acts as the Schiff-base intermediate with DXP in catalysis. Residues G164, A190 to G191, and N212 to T213 each bind 1-deoxy-D-xylulose 5-phosphate.

Belongs to the ThiG family. In terms of assembly, homotetramer. Forms heterodimers with either ThiH or ThiS.

The protein resides in the cytoplasm. It carries out the reaction [ThiS sulfur-carrier protein]-C-terminal-Gly-aminoethanethioate + 2-iminoacetate + 1-deoxy-D-xylulose 5-phosphate = [ThiS sulfur-carrier protein]-C-terminal Gly-Gly + 2-[(2R,5Z)-2-carboxy-4-methylthiazol-5(2H)-ylidene]ethyl phosphate + 2 H2O + H(+). The protein operates within cofactor biosynthesis; thiamine diphosphate biosynthesis. Its function is as follows. Catalyzes the rearrangement of 1-deoxy-D-xylulose 5-phosphate (DXP) to produce the thiazole phosphate moiety of thiamine. Sulfur is provided by the thiocarboxylate moiety of the carrier protein ThiS. In vitro, sulfur can be provided by H(2)S. In Bordetella bronchiseptica (strain ATCC BAA-588 / NCTC 13252 / RB50) (Alcaligenes bronchisepticus), this protein is Thiazole synthase.